The primary structure comprises 202 residues: Cryptic protein (202 aa).

A signal peptide spans 1 to 35 (MRANSPTQGISLKMHQARPLFLVTVALQLIGLGYS). N65 carries N-linked (GlcNAc...) asparagine glycosylation. The EGF-like domain occupies 94–123 (PVSRCCHNGGTCVLGSFCVCPAYFTGRYCE). Disulfide bonds link C98–C105, C99–C111, and C113–C122. D166 is lipidated: GPI-anchor amidated aspartate. A propeptide spans 167–202 (LKSFLSSGARGSRECSIPSLLLLVLCLLLQGVAGKG) (removed in mature form).

It belongs to the EGF-CFC (Cripto-1/FRL1/Cryptic) family. N-glycosylated. No expressed in adult tissues.

It is found in the cell membrane. Its subcellular location is the secreted. Functionally, nodal coreceptor involved in the correct establishment of the left-right axis. May play a role in mesoderm and/or neural patterning during gastrulation. The protein is Cryptic protein (Cfc1) of Mus musculus (Mouse).